The following is a 456-amino-acid chain: Histidine--tRNA ligase (456 aa).

Belongs to the class-II aminoacyl-tRNA synthetase family. Homodimer.

The protein localises to the cytoplasm. It carries out the reaction tRNA(His) + L-histidine + ATP = L-histidyl-tRNA(His) + AMP + diphosphate + H(+). The chain is Histidine--tRNA ligase from Christiangramia forsetii (strain DSM 17595 / CGMCC 1.15422 / KT0803) (Gramella forsetii).